The primary structure comprises 196 residues: ATP-dependent Clp protease proteolytic subunit (196 aa).

Residue S98 is the Nucleophile of the active site. Residue H123 is part of the active site.

This sequence belongs to the peptidase S14 family. In terms of assembly, fourteen ClpP subunits assemble into 2 heptameric rings which stack back to back to give a disk-like structure with a central cavity, resembling the structure of eukaryotic proteasomes.

It is found in the cytoplasm. The enzyme catalyses Hydrolysis of proteins to small peptides in the presence of ATP and magnesium. alpha-casein is the usual test substrate. In the absence of ATP, only oligopeptides shorter than five residues are hydrolyzed (such as succinyl-Leu-Tyr-|-NHMec, and Leu-Tyr-Leu-|-Tyr-Trp, in which cleavage of the -Tyr-|-Leu- and -Tyr-|-Trp bonds also occurs).. In terms of biological role, cleaves peptides in various proteins in a process that requires ATP hydrolysis. Has a chymotrypsin-like activity. Plays a major role in the degradation of misfolded proteins. The chain is ATP-dependent Clp protease proteolytic subunit from Limosilactobacillus fermentum (strain NBRC 3956 / LMG 18251) (Lactobacillus fermentum).